We begin with the raw amino-acid sequence, 329 residues long: Trem-like transcript 2 protein (329 aa).

The signal sequence occupies residues 1–24 (MEPWPLTFLLLLLLLLWLQGCVSG). The Ig-like V-type domain maps to 25–126 (HSNENLYRKV…HFYPLVGFQL (102 aa)). Over 25 to 270 (HSNENLYRKV…NRSQETYIPA (246 aa)) the chain is Extracellular. 2 disulfide bridges follow: Cys46–Cys110 and Cys61–Cys68. The interval 202 to 259 (FIDTSGTVTEPERNTESQPATLSPSNARSFSADPVTTSTMSRHQSSSLSTTGTCHPLT) is disordered. Residues 217–259 (ESQPATLSPSNARSFSADPVTTSTMSRHQSSSLSTTGTCHPLT) are compositionally biased toward polar residues. Asn261 is a glycosylation site (N-linked (GlcNAc...) asparagine). Residues 271 to 291 (MVVVLTFLPAPVVLVVAYGFW) form a helical membrane-spanning segment. Topologically, residues 292–329 (KKRHMGRYNLGSNYAKPWIHLPEGPETPWKPAWSKITQ) are cytoplasmic.

In terms of assembly, interacts with CD276 and this interaction enhances T-cell activation. Detected in B-lymphocytes and macrophages. Detected in spleen, lymph nodes, blood, bone marrow and cells from the peritoneal cavity (at protein level).

The protein resides in the cell membrane. Functionally, cell surface receptor that may play a role in the innate and adaptive immune response. Acts as a counter-receptor for CD276 and interaction with CD276 on T-cells enhances T-cell activation. In Mus musculus (Mouse), this protein is Trem-like transcript 2 protein (Treml2).